Here is a 191-residue protein sequence, read N- to C-terminus: Phosphopantetheine adenylyltransferase (191 aa).

Ser8 is a binding site for substrate. Residues Ser8 to Phe9 and His16 contribute to the ATP site. Substrate is bound by residues Lys40, Thr72, and Arg86. Residues Gly87–Arg89, Glu97, and Tyr122–Ser128 contribute to the ATP site.

This sequence belongs to the bacterial CoaD family. As to quaternary structure, homohexamer. It depends on Mg(2+) as a cofactor.

The protein resides in the cytoplasm. It carries out the reaction (R)-4'-phosphopantetheine + ATP + H(+) = 3'-dephospho-CoA + diphosphate. The protein operates within cofactor biosynthesis; coenzyme A biosynthesis; CoA from (R)-pantothenate: step 4/5. Functionally, reversibly transfers an adenylyl group from ATP to 4'-phosphopantetheine, yielding dephospho-CoA (dPCoA) and pyrophosphate. The protein is Phosphopantetheine adenylyltransferase of Nostoc sp. (strain PCC 7120 / SAG 25.82 / UTEX 2576).